Consider the following 219-residue polypeptide: Transmembrane emp24 domain-containing protein 10 (219 aa).

An N-terminal signal peptide occupies residues 1 to 31; it reads MSGSSGPQAQRGPCPFALLLLLLLGPSSVLA. Residues 1 to 142 form a required for interaction with STX17 region; the sequence is MSGSSGPQAQ…KNYEEIAKVE (142 aa). At 32–185 the chain is on the lumenal side; that stretch reads ISFHLPVNSR…RDTNESTNTR (154 aa). A GOLD domain is found at 41-193; that stretch reads RKCLREEIHK…TRVLYFSIFS (153 aa). Positions 147 to 178 are required for TMED10 and TMED2 cis-Golgi network localization; the sequence is LEVELRRLEDLSESIVNDFAYMKKREEEMRDT. Arginine 171 and arginine 176 each carry dimethylated arginine. N-linked (GlcNAc...) asparagine glycosylation is present at asparagine 179. Residues 186 to 206 form a helical membrane-spanning segment; that stretch reads VLYFSIFSMFCLIGLATWQVF. The interaction with COPG1 stretch occupies residues 204-219; the sequence is QVFYLRRFFKAKKLIE. Residues 207-219 lie on the Cytoplasmic side of the membrane; it reads YLRRFFKAKKLIE. The segment at 207–219 is interaction with ARF1 and IL1B; that stretch reads YLRRFFKAKKLIE. The COPII vesicle coat-binding motif lies at 211-212; the sequence is FF. The COPI vesicle coat-binding motif lies at 211-219; sequence FFKAKKLIE.

The protein belongs to the EMP24/GP25L family. Predominantly dimeric and to a lesser extent monomeric in the ER. Monomer and dimer in ERGIC and cis-Golgi network. Forms homooligomer (via GOLD domain); the assembly is promoted by direct binding with leaderless cargos and may form a protein channel that facilitates cargo entry into the ERGIC. Forms heterooligomeric complexes with other members of the p24 family such as TMED2, TMED7 and TMED9. Interacts (via GOLD domain) with TMED2 (via GOLD domain); the complex is required for export of TMED10 from the ER to the cis-Golgi network; the complex is proposed to be involved in cis-Golgi network dynamics and / or biogenesis. Associates with the COPI vesicle coat subunits (coatomer). Tetramerization of the cytoplasmic domain at the Golgi membrane in vitro; the complex is proposed to interact with COPI coatomer and induce budding of the vesicles. Interacts with COPG1; the interaction involves TMED10 homodimer. Interacts with ARF1 (GDP-bound); the interaction probably involves a TMED10 oligomer. Interacts with SEC23A, SEC24B, SEC24C and SEC24D components of the coat protein complex II/COPII, indicative of an association of TMED10 with the COPII vesicle coat. Interacts with CD59. Interacts with MPPE1/PGAP5; the complex might recruit and sort GPI-anchored proteins to the ER-exit site, or the interaction might lead to recycling of PGAP5 between the ER and the Golgi. Interacts with F2LR1/PAR2. Interacts with KDELR2/ERD2; the interaction is disrupted by KDELR2 ligand. Found in a complex composed at least of SURF4, TMED2 and TMED10. Associates with the presenilin-dependent gamma-secretase complex. Interacts with STX17; the interaction is direct. Interacts with IL-1; the interaction is direct. Interacts with RAB21 (active GTP-bound form); the interaction is indirect and regulates TMED10 abundance and localization at the Golgi.

It localises to the endoplasmic reticulum membrane. Its subcellular location is the endoplasmic reticulum-Golgi intermediate compartment membrane. It is found in the golgi apparatus membrane. The protein localises to the golgi apparatus. The protein resides in the cis-Golgi network membrane. It localises to the trans-Golgi network membrane. Its subcellular location is the cytoplasmic vesicle. It is found in the secretory vesicle membrane. The protein localises to the cell membrane. The protein resides in the melanosome. Cargo receptor involved in protein vesicular trafficking and quality control in the endoplasmic reticulum (ER) and Golgi. The p24 protein family is a group of transmembrane proteins that bind coat protein complex I/COPI and coat protein complex II/COPII involved in vesicular trafficking between the membranes. Acts at the lumenal side for incorporation of secretory cargo molecules into transport vesicles and involved in vesicle coat formation at the cytoplasmic side. Mainly functions in the early secretory pathway and cycles between the ER, ER-Golgi intermediate compartment (ERGIC) and Golgi, mediating cargo transport through COPI and COPII-coated vesicles. In COPII vesicle-mediated anterograde transport, involved in the transport of GPI-anchored proteins by acting together with TMED2 as their cargo receptor; the function specifically implies SEC24C and SEC24D of the COPII vesicle coat and lipid raft-like microdomains of the ER. Recognizes GPI anchors structural remodeled in the ER by the GPI inositol-deacylase/PGAP1 and the metallophosphoesterase MPPE1/PGAP5. In COPI vesicle-mediated retrograde transport, involved in the biogenesis of COPI vesicles and vesicle coat recruitment. Involved in trafficking of amyloid beta A4 protein and soluble APP-beta release (independent from the modulation of gamma-secretase activity). Involved in the KDELR2-mediated retrograde transport of the toxin A subunit (CTX-A-K63)together with COPI and the COOH terminus of KDELR2. On Golgi membranes, acts as a primary receptor for ARF1-GDP, a GTP-binding protein involved in COPI-vesicle formation. Increases coatomer-dependent GTPase-activating activity of ARFGAP2 which mediates the hydrolysis of ARF1-bound GTP and therefore modulates protein trafficking from the Golgi apparatus. Involved in the exocytic trafficking of G protein-coupled receptors F2LR1/PAR2 (trypsin and tryspin-like enzyme receptor), OPRM1 (opioid receptor) and P2RY4 (UTD and UDP receptor) from the Golgi to the plasma membrane, thus contributing to receptor resensitization. In addition to its cargo receptor activity, may also act as a protein channel after oligomerization, facilitating the post-translational entry of leaderless cytoplasmic cargo into the ERGIC. Involved in the translocation into ERGIC, the vesicle entry and the secretion of leaderless cargos (lacking the secretion signal sequence), including the mature form of interleukin 1/IL-1 family members, the alpha-crystallin B chain HSPB5, the carbohydrate-binding proteins galectin-1/LGALS1 and galectin-3/LGALS3, the microtubule-associated protein Tau/MAPT, and the annexin A1/ANXA1; the translocation process is dependent on cargo protein unfolding and enhanced by chaperones HSP90AB1 and HSP90B1/GRP9. Could also associates with the presenilin-dependent gamma-secretase complex in order to regulate gamma-cleavages of the amyloid beta A4 protein to yield amyloid-beta 40/Abeta40. The polypeptide is Transmembrane emp24 domain-containing protein 10 (TMED10) (Bos taurus (Bovine)).